Consider the following 116-residue polypeptide: Small ribosomal subunit protein uS13m (116 aa).

It belongs to the universal ribosomal protein uS13 family. Part of the small ribosomal subunit.

It localises to the mitochondrion. Located at the top of the head of the small subunit, it contacts several helices of the 18S rRNA. The polypeptide is Small ribosomal subunit protein uS13m (RPS13) (Daucus carota (Wild carrot)).